The following is a 102-amino-acid chain: Small ribosomal subunit protein uS10 (102 aa).

The protein belongs to the universal ribosomal protein uS10 family. As to quaternary structure, part of the 30S ribosomal subunit.

Its function is as follows. Involved in the binding of tRNA to the ribosomes. This is Small ribosomal subunit protein uS10 from Chlorobium phaeobacteroides (strain BS1).